The sequence spans 436 residues: Citrate synthase (436 aa).

Catalysis depends on residues histidine 311 and aspartate 370.

The protein belongs to the citrate synthase family. Homohexamer.

The catalysed reaction is oxaloacetate + acetyl-CoA + H2O = citrate + CoA + H(+). Its pathway is carbohydrate metabolism; tricarboxylic acid cycle; isocitrate from oxaloacetate: step 1/2. Its activity is regulated as follows. Allosterically inhibited by NADH. The sequence is that of Citrate synthase (gltA) from Rickettsia prowazekii (strain Madrid E).